The following is a 211-amino-acid chain: Large ribosomal subunit protein eL13 (211 aa).

K16 bears the N6-acetyllysine mark. S77 and S106 each carry phosphoserine. Glycyl lysine isopeptide (Lys-Gly) (interchain with G-Cter in SUMO2) cross-links involve residues K123 and K145. Residue K174 forms a Glycyl lysine isopeptide (Lys-Gly) (interchain with G-Cter in SUMO1); alternate linkage. Glycyl lysine isopeptide (Lys-Gly) (interchain with G-Cter in SUMO2); alternate cross-links involve residues K174 and K177. The residue at position 177 (K177) is an N6-acetyllysine; alternate.

The protein belongs to the eukaryotic ribosomal protein eL13 family. As to quaternary structure, component of the 60S large ribosomal subunit (LSU).

The protein localises to the cytoplasm. In terms of biological role, component of the ribosome, a large ribonucleoprotein complex responsible for the synthesis of proteins in the cell. The small ribosomal subunit (SSU) binds messenger RNAs (mRNAs) and translates the encoded message by selecting cognate aminoacyl-transfer RNA (tRNA) molecules. The large subunit (LSU) contains the ribosomal catalytic site termed the peptidyl transferase center (PTC), which catalyzes the formation of peptide bonds, thereby polymerizing the amino acids delivered by tRNAs into a polypeptide chain. The nascent polypeptides leave the ribosome through a tunnel in the LSU and interact with protein factors that function in enzymatic processing, targeting, and the membrane insertion of nascent chains at the exit of the ribosomal tunnel. As part of the LSU, it is probably required for its formation and the maturation of rRNAs. Plays a role in bone development. In Oryctolagus cuniculus (Rabbit), this protein is Large ribosomal subunit protein eL13 (RPL13).